We begin with the raw amino-acid sequence, 138 residues long: UPF0201 protein PH1010 (138 aa).

The protein belongs to the UPF0201 family.

This is UPF0201 protein PH1010 from Pyrococcus horikoshii (strain ATCC 700860 / DSM 12428 / JCM 9974 / NBRC 100139 / OT-3).